Reading from the N-terminus, the 873-residue chain is Probable beta-glucosidase A (873 aa).

A signal peptide spans 1–19; the sequence is MRFGWLEVAALTAASVANA. N-linked (GlcNAc...) asparagine glycans are attached at residues asparagine 71, asparagine 222, and asparagine 263. Residue aspartate 291 is part of the active site. Asparagine 326, asparagine 333, asparagine 365, asparagine 453, asparagine 534, asparagine 553, asparagine 575, asparagine 679, and asparagine 725 each carry an N-linked (GlcNAc...) asparagine glycan. Residues 730–765 are disordered; that stretch reads EDSSDDPNYGWEDSEYIPEGARDGSPQPLLKAGGAP.

The protein belongs to the glycosyl hydrolase 3 family.

It is found in the secreted. It catalyses the reaction Hydrolysis of terminal, non-reducing beta-D-glucosyl residues with release of beta-D-glucose.. It functions in the pathway glycan metabolism; cellulose degradation. Its function is as follows. Beta-glucosidases are one of a number of cellulolytic enzymes involved in the degradation of cellulosic biomass. Catalyzes the last step releasing glucose from the inhibitory cellobiose. The sequence is that of Probable beta-glucosidase A (bglA) from Neosartorya fischeri (strain ATCC 1020 / DSM 3700 / CBS 544.65 / FGSC A1164 / JCM 1740 / NRRL 181 / WB 181) (Aspergillus fischerianus).